The primary structure comprises 173 residues: 6,7-dimethyl-8-ribityllumazine synthase (173 aa).

Residues F24, 58-60 (ALE), and 82-84 (AVI) contribute to the 5-amino-6-(D-ribitylamino)uracil site. Residue 87–88 (ET) coordinates (2S)-2-hydroxy-3-oxobutyl phosphate. Catalysis depends on H90, which acts as the Proton donor. N115 provides a ligand contact to 5-amino-6-(D-ribitylamino)uracil. R129 lines the (2S)-2-hydroxy-3-oxobutyl phosphate pocket. Residues 150–173 (TLDQLSDDEEDEEDEDDEDEEERA) form a disordered region. A compositionally biased stretch (acidic residues) spans 154-173 (LSDDEEDEEDEDDEDEEERA).

Belongs to the DMRL synthase family.

It carries out the reaction (2S)-2-hydroxy-3-oxobutyl phosphate + 5-amino-6-(D-ribitylamino)uracil = 6,7-dimethyl-8-(1-D-ribityl)lumazine + phosphate + 2 H2O + H(+). It participates in cofactor biosynthesis; riboflavin biosynthesis; riboflavin from 2-hydroxy-3-oxobutyl phosphate and 5-amino-6-(D-ribitylamino)uracil: step 1/2. Its function is as follows. Catalyzes the formation of 6,7-dimethyl-8-ribityllumazine by condensation of 5-amino-6-(D-ribitylamino)uracil with 3,4-dihydroxy-2-butanone 4-phosphate. This is the penultimate step in the biosynthesis of riboflavin. The chain is 6,7-dimethyl-8-ribityllumazine synthase from Burkholderia mallei (strain NCTC 10247).